The chain runs to 134 residues: Small ribosomal subunit protein bS16 (134 aa).

Positions 105 to 134 (EAERRQKRLTAKTRRRQAKKAAEAAGSAEG) are disordered. Residues 109-123 (RQKRLTAKTRRRQAK) show a composition bias toward basic residues.

This sequence belongs to the bacterial ribosomal protein bS16 family.

This Chlorobaculum parvum (strain DSM 263 / NCIMB 8327) (Chlorobium vibrioforme subsp. thiosulfatophilum) protein is Small ribosomal subunit protein bS16.